The chain runs to 901 residues: Modifier of cell death (901 aa).

2 disordered regions span residues 147-169 (AQKRGRFPPQARSSLSPQKPRAA) and 218-245 (PRKSAPWQEETAANGGPQSTSLIRSPSP). Residues 259–282 (FKCAECGDGFPVMDRLCDHMIKQH) form a C2H2-type zinc finger. Disordered regions lie at residues 494 to 528 (KKEHMDYDEPDPNIPSTSAQALGYNPDDDEGDDVP), 682 to 717 (QERVHQPERRPRRSAAPASPAKPQYRPQPPARSHEE), and 779 to 901 (HKAI…WDDN). Over residues 817–828 (EAAAKLIQAENE) the composition is skewed to low complexity. The span at 829-840 (MVVEEEEVEEPP) shows a compositional bias: acidic residues. The segment covering 846 to 866 (QVPKEKEVEVAEAEKLPEQVK) has biased composition (basic and acidic residues).

Promotes programmed cell death. Its role in programmed cell death may be in conjunction with cell cycle regulatory factor efl-1 and the synthetic multivulva class B proteins dpl-1 and lin-35, and is independent of the ced-1, ced-8 and ced-9 pathways. The chain is Modifier of cell death from Caenorhabditis elegans.